We begin with the raw amino-acid sequence, 138 residues long: Basic phospholipase A2 BP-III (138 aa).

Residues 1-16 (MRTLWIMAVLLVGVDG) form the signal peptide. 7 disulfides stabilise this stretch: Cys42–Cys132, Cys44–Cys60, Cys59–Cys112, Cys65–Cys138, Cys66–Cys105, Cys73–Cys98, and Cys91–Cys103. Residues Gly45 and Gly47 each coordinate Ca(2+). His63 is a catalytic residue. Asp106 is an active-site residue.

Belongs to the phospholipase A2 family. Group II subfamily. K49 sub-subfamily. Ca(2+) is required as a cofactor. As to expression, expressed by the venom gland.

The protein resides in the secreted. The catalysed reaction is a 1,2-diacyl-sn-glycero-3-phosphocholine + H2O = a 1-acyl-sn-glycero-3-phosphocholine + a fatty acid + H(+). In terms of biological role, snake venom phospholipase A2 (PLA2) that has low phospholipase A2 activity. Shows anticoagulant activities, strong myolytic activity, infiltration of polymorphonuclear cells, and edema in stromal tissues. Induces cell death of Jurkat cells in a concentration dependent manner. PLA2 catalyzes the calcium-dependent hydrolysis of the 2-acyl groups in 3-sn-phosphoglycerides. The protein is Basic phospholipase A2 BP-III of Protobothrops flavoviridis (Habu).